The primary structure comprises 159 residues: NADH-quinone oxidoreductase subunit I (159 aa).

4Fe-4S ferredoxin-type domains are found at residues 51–80 (RRYE…IEAD) and 90–119 (TRYD…EGPN). Residues Cys60, Cys63, Cys66, Cys70, Cys99, Cys102, Cys105, and Cys109 each contribute to the [4Fe-4S] cluster site.

Belongs to the complex I 23 kDa subunit family. As to quaternary structure, NDH-1 is composed of 14 different subunits. Subunits NuoA, H, J, K, L, M, N constitute the membrane sector of the complex. Requires [4Fe-4S] cluster as cofactor.

It is found in the cell inner membrane. It catalyses the reaction a quinone + NADH + 5 H(+)(in) = a quinol + NAD(+) + 4 H(+)(out). In terms of biological role, NDH-1 shuttles electrons from NADH, via FMN and iron-sulfur (Fe-S) centers, to quinones in the respiratory chain. The immediate electron acceptor for the enzyme in this species is believed to be ubiquinone. Couples the redox reaction to proton translocation (for every two electrons transferred, four hydrogen ions are translocated across the cytoplasmic membrane), and thus conserves the redox energy in a proton gradient. The sequence is that of NADH-quinone oxidoreductase subunit I from Rickettsia massiliae (strain Mtu5).